Consider the following 234-residue polypeptide: Carboxy-S-adenosyl-L-methionine synthase (234 aa).

Residues Tyr-35, 60 to 62 (GCS), 109 to 110 (DV), Asn-124, and Arg-191 contribute to the S-adenosyl-L-methionine site.

It belongs to the class I-like SAM-binding methyltransferase superfamily. Cx-SAM synthase family. As to quaternary structure, homodimer.

The catalysed reaction is prephenate + S-adenosyl-L-methionine = carboxy-S-adenosyl-L-methionine + 3-phenylpyruvate + H2O. Its function is as follows. Catalyzes the conversion of S-adenosyl-L-methionine (SAM) to carboxy-S-adenosyl-L-methionine (Cx-SAM). This is Carboxy-S-adenosyl-L-methionine synthase from Campylobacter curvus (strain 525.92).